Here is a 256-residue protein sequence, read N- to C-terminus: Triosephosphate isomerase (256 aa).

10 to 12 serves as a coordination point for substrate; that stretch reads NWK. Histidine 96 (electrophile) is an active-site residue. The Proton acceptor role is filled by glutamate 168. Substrate contacts are provided by glycine 174 and serine 213.

The protein belongs to the triosephosphate isomerase family. In terms of assembly, homodimer.

Its subcellular location is the cytoplasm. It carries out the reaction D-glyceraldehyde 3-phosphate = dihydroxyacetone phosphate. It functions in the pathway carbohydrate biosynthesis; gluconeogenesis. It participates in carbohydrate degradation; glycolysis; D-glyceraldehyde 3-phosphate from glycerone phosphate: step 1/1. Functionally, involved in the gluconeogenesis. Catalyzes stereospecifically the conversion of dihydroxyacetone phosphate (DHAP) to D-glyceraldehyde-3-phosphate (G3P). The sequence is that of Triosephosphate isomerase from Wigglesworthia glossinidia brevipalpis.